The chain runs to 790 residues: LPS-assembly protein LptD (790 aa).

The signal sequence occupies residues 1-20 (MRMLRWLILSAFSVAGAVQA).

This sequence belongs to the LptD family. In terms of assembly, component of the lipopolysaccharide transport and assembly complex. Interacts with LptE and LptA.

It localises to the cell outer membrane. Functionally, together with LptE, is involved in the assembly of lipopolysaccharide (LPS) at the surface of the outer membrane. The sequence is that of LPS-assembly protein LptD from Bordetella pertussis (strain Tohama I / ATCC BAA-589 / NCTC 13251).